The chain runs to 468 residues: MVVTRIAPSPTGDPHVGTAYIALFNYAWARRNGGRFIVRIEDTDRARYVPGAEERILAALKWLGLSYDEGPDVGGPHGPYRQSERLPLYQKYAEELLKRGWAYRAFETPEELEQIRKEKGGYDGRARNIPPEEAEERARRGEPHVIRLKVPRPGTTEVKDELRGVVVYDNQEIPDVVLLKSDGYPTYHLANVVDDHLMGVTDVIRAEEWLVSTPIHVLLYRAFGWEAPRFYHMPLLRNPDKTKISKRKSHTSLDWYKAEGFLPEALRNYLCLMGFSMPDGREIFTLEEFIQAFTWERVSLGGPVFDLEKLRWMNGKYIREVLSLEEVAERVKPFLREAGLSWESEAYLRRAVELMRPRFDTLKEFPEKARYLFTEDYPVSEKAQRKLEEGLPLLKELYPRLRAQEEWTEAALEALLRGFAAEKGVKLGQVAQPLRAALTGSLETPGLFEILALLGKERALRRLERALA.

5 to 7 is a binding site for L-glutamate; that stretch reads RIA. Residues 8 to 18 carry the 'HIGH' region motif; it reads PSPTGDPHVGT. Histidine 15 contacts ATP. L-glutamate-binding positions include glutamate 41, 187 to 191, and arginine 205; that span reads YHLAN. Residues glutamate 208, leucine 236, 243–247, and lysine 246 contribute to the ATP site; that span reads KISKR. A 'KMSKS' region motif is present at residues 243–247; sequence KISKR. An interaction with tRNA region spans residues 432–447; the sequence is QPLRAALTGSLETPGL.

The protein belongs to the class-I aminoacyl-tRNA synthetase family. Glutamate--tRNA ligase type 1 subfamily. Monomer.

It localises to the cytoplasm. The enzyme catalyses tRNA(Glu) + L-glutamate + ATP = L-glutamyl-tRNA(Glu) + AMP + diphosphate. In the absence of bound tRNA, ATP is bound in a non-productive mode, and the enzyme cannot activate amino acids. In terms of biological role, catalyzes the attachment of glutamate to tRNA(Glu) in a two-step reaction: glutamate is first activated by ATP to form Glu-AMP and then transferred to the acceptor end of tRNA(Glu). The polypeptide is Glutamate--tRNA ligase (Thermus thermophilus (strain ATCC 27634 / DSM 579 / HB8)).